Consider the following 340-residue polypeptide: S-adenosylmethionine:tRNA ribosyltransferase-isomerase (340 aa).

This sequence belongs to the QueA family. Monomer.

The protein resides in the cytoplasm. The enzyme catalyses 7-aminomethyl-7-carbaguanosine(34) in tRNA + S-adenosyl-L-methionine = epoxyqueuosine(34) in tRNA + adenine + L-methionine + 2 H(+). Its pathway is tRNA modification; tRNA-queuosine biosynthesis. Transfers and isomerizes the ribose moiety from AdoMet to the 7-aminomethyl group of 7-deazaguanine (preQ1-tRNA) to give epoxyqueuosine (oQ-tRNA). The sequence is that of S-adenosylmethionine:tRNA ribosyltransferase-isomerase from Francisella tularensis subsp. tularensis (strain FSC 198).